The primary structure comprises 472 residues: FAD-dependent monooxygenase ltmM (472 aa).

Residues 7 to 27 traverse the membrane as a helical segment; it reads VIIVGGSVAGLSLAHCLEKIG. The FAD site is built by E34, G48, and R107. N186 is a glycosylation site (N-linked (GlcNAc...) asparagine). FAD is bound by residues D306 and A319. A helical membrane pass occupies residues 450 to 470; the sequence is IVYALYLVAAAAFILYCLSSL.

It belongs to the paxM FAD-dependent monooxygenase family. FAD serves as cofactor.

It is found in the membrane. It participates in secondary metabolite biosynthesis. In terms of biological role, FAD-dependent monooxygenase; part of the gene cluster that mediates the biosynthesis of lolitrems, indole-diterpene mycotoxins that are potent tremorgens in mammals, and are synthesized by clavicipitaceous fungal endophytes in association with their grass hosts. The geranylgeranyl diphosphate (GGPP) synthase ltmG is proposed to catalyze the first step in lolitremB biosynthesis. LtmG catalyzes a series of iterative condensations of isopentenyl diphosphate (IPP) with dimethylallyl diphosphate (DMAPP), geranyl diphosphate (GPP), and farnesyl diphosphate (FPP), to form GGPP. GGPP then condenses with indole-3-glycerol phosphate to form 3-geranylgeranylindole, an acyclic intermediate, to be incorporated into paxilline. Either ltmG or ltmC could be responsible for this step, as both are putative prenyl transferases. The FAD-dependent monooxygenase ltmM then catalyzes the epoxidation of the two terminal alkenes of the geranylgeranyl moiety, which is subsequently cyclized by ltmB, to paspaline. The cytochrome P450 monooxygenases ltmQ and ltmP can sequentially oxidize paspaline to terpendole E and terpendole F. Alternatively, ltmP converts paspaline to an intermediate which is oxidized by ltmQ to terpendole F. LtmF, ltmK, ltmE and ltmJ appear to be unique to the epichloe endophytes. The prenyltransferase ltmF is involved in the 27-hydroxyl-O-prenylation. The cytochrome P450 monooxygenase ltmK is required for the oxidative acetal ring formation. The multi-functional prenyltransferase ltmE is required for C20- and C21-prenylations of the indole ring of paspalanes and acts together with the cytochrome P450 monooxygenase ltmJ to yield lolitremanes by multiple oxidations and ring closures. The stereoisomer pairs of lolitriol and lolitrem N or lolitrem B and lolitrem F may be attributed to variations in the way in which ring closure can occur under the action of ltmJ. While the major product of this pathway is lolitrem B, the prenyl transferases and cytochrome P450 monooxygenases identified in this pathway have a remarkable versatility in their regio- and stereo-specificities to generate a diverse range of metabolites that are products of a metabolic grid rather than a linear pathway. The sequence is that of FAD-dependent monooxygenase ltmM (ltmM) from Epichloe festucae var. lolii (Neotyphodium lolii).